A 557-amino-acid polypeptide reads, in one-letter code: Protein Red (557 aa).

Positions 1-84 (MPERDSEPFS…RKKKSYYAKL (84 aa)) are disordered. Over residues 16–25 (DGHDVDDPHS) the composition is skewed to basic and acidic residues. Over residues 42–53 (TPRAAPTSAPPS) the composition is skewed to low complexity. An N6-acetyllysine mark is found at Lys-98 and Lys-137. A Glycyl lysine isopeptide (Lys-Gly) (interchain with G-Cter in SUMO2) cross-link involves residue Lys-151. The interval 181–205 (KEKEEEELMEKPQKETKKDEDPENK) is disordered. Phosphoserine is present on Ser-287. Over residues 294 to 303 (RNKKLKKKDK) the composition is skewed to basic residues. The segment at 294–402 (RNKKLKKKDK…PIDVDKGPGS (109 aa)) is disordered. Residues 304 to 313 (GKLEEKKPPE) are compositionally biased toward basic and acidic residues. Residues Lys-310 and Lys-331 each participate in a glycyl lysine isopeptide (Lys-Gly) (interchain with G-Cter in SUMO2) cross-link. The span at 332–398 (TPRDKERERY…VDDEPIDVDK (67 aa)) shows a compositional bias: basic and acidic residues. A run of 17 repeats spans residues 342-343 (RE), 344-345 (RE), 346-347 (RD), 348-349 (RE), 350-351 (RD), 352-353 (RD), 354-355 (RD), 356-357 (RE), 358-359 (RE), 360-361 (RE), 362-363 (RD), 364-365 (RE), 366-367 (RE), 368-369 (RE), 370-371 (RD), 372-373 (RE), and 374-375 (RE). A 17 X 2 AA tandem repeats of R-[ED] region spans residues 342-375 (RERERDRERDRDRDRERERERDRERERERDRERE). Residues Lys-386, Lys-388, Lys-404, and Lys-408 each participate in a glycyl lysine isopeptide (Lys-Gly) (interchain with G-Cter in SUMO2) cross-link. A phosphoserine mark is found at Ser-417 and Ser-460. Thr-485 is modified (phosphothreonine). Residues Lys-496, Lys-501, and Lys-509 each participate in a glycyl lysine isopeptide (Lys-Gly) (interchain with G-Cter in SUMO2) cross-link. Ser-536 bears the Phosphoserine mark. Residues Lys-541, Lys-543, Lys-544, and Lys-553 each participate in a glycyl lysine isopeptide (Lys-Gly) (interchain with G-Cter in SUMO2) cross-link.

This sequence belongs to the RED family. Component of the spliceosome B complex. Interacts with SMU1. Interacts with MAD1L1. May interact with DHX15.

The protein resides in the nucleus. Its subcellular location is the nucleoplasm. It localises to the chromosome. It is found in the cytoplasm. The protein localises to the cytoskeleton. The protein resides in the spindle pole. Involved in pre-mRNA splicing as a component of the spliceosome. Auxiliary spliceosomal protein that regulates selection of alternative splice sites in a small set of target pre-mRNA species. Required for normal mitotic cell cycle progression. Recruits MAD1L1 and MAD2L1 to kinetochores, and is required to trigger the spindle assembly checkpoint. Required for normal accumulation of SMU1. The sequence is that of Protein Red (IK) from Pongo abelii (Sumatran orangutan).